A 366-amino-acid polypeptide reads, in one-letter code: Tetraacyldisaccharide 4'-kinase (366 aa).

65–72 (TVGGTGKT) serves as a coordination point for ATP. The disordered stretch occupies residues 343–366 (AKSTPASGGATGLNKEHQDGQPAA). A compositionally biased stretch (basic and acidic residues) spans 356 to 366 (NKEHQDGQPAA).

Belongs to the LpxK family.

It catalyses the reaction a lipid A disaccharide + ATP = a lipid IVA + ADP + H(+). It functions in the pathway glycolipid biosynthesis; lipid IV(A) biosynthesis; lipid IV(A) from (3R)-3-hydroxytetradecanoyl-[acyl-carrier-protein] and UDP-N-acetyl-alpha-D-glucosamine: step 6/6. Its function is as follows. Transfers the gamma-phosphate of ATP to the 4'-position of a tetraacyldisaccharide 1-phosphate intermediate (termed DS-1-P) to form tetraacyldisaccharide 1,4'-bis-phosphate (lipid IVA). The polypeptide is Tetraacyldisaccharide 4'-kinase (Cupriavidus pinatubonensis (strain JMP 134 / LMG 1197) (Cupriavidus necator (strain JMP 134))).